A 643-amino-acid polypeptide reads, in one-letter code: 1-deoxy-D-xylulose-5-phosphate synthase (643 aa).

Thiamine diphosphate-binding positions include H72 and 113 to 115; that span reads GHA. Mg(2+) is bound at residue D144. Residues 145 to 146, N174, Y287, and E370 contribute to the thiamine diphosphate site; that span reads GA. Mg(2+) is bound at residue N174.

The protein belongs to the transketolase family. DXPS subfamily. Homodimer. Mg(2+) is required as a cofactor. The cofactor is thiamine diphosphate.

It catalyses the reaction D-glyceraldehyde 3-phosphate + pyruvate + H(+) = 1-deoxy-D-xylulose 5-phosphate + CO2. Its pathway is metabolic intermediate biosynthesis; 1-deoxy-D-xylulose 5-phosphate biosynthesis; 1-deoxy-D-xylulose 5-phosphate from D-glyceraldehyde 3-phosphate and pyruvate: step 1/1. Catalyzes the acyloin condensation reaction between C atoms 2 and 3 of pyruvate and glyceraldehyde 3-phosphate to yield 1-deoxy-D-xylulose-5-phosphate (DXP). This chain is 1-deoxy-D-xylulose-5-phosphate synthase, found in Prochlorococcus marinus (strain MIT 9211).